We begin with the raw amino-acid sequence, 261 residues long: MELKIARAIIKHGLEDLYEYSDVDVAIVGAGPAGLTAARYLAERGHKVVVYERRFSFGGGIGPGGNMIPKIVVQEEAVPVLRDFKIRYKPVGDGLYTVDPAELIAKLAAGAIDAGAKIILGVHVDDVIFRGDPPRVVGLLWVWTPIQMSGSHVDPLYTQAKAVLDATGHDAEVISIAARKVPELGIEVRGEKSAWAEVSEKLVVEHTGRVAPGLYVAGMAVCTVHGLPRMGPIFGGMLLSGRRAAEIIHKDLVEEVYAVRA.

Residues Ala33, 52–53 (ER), Gly60, Val124, and 152–154 (HVD) each bind NAD(+). Residues Asp154 and His169 each contribute to the Fe cation site. Met219 provides a ligand contact to NAD(+). Arg229 serves as a coordination point for glycine.

It belongs to the THI4 family. Homooctamer; tetramer of dimers. Fe(2+) is required as a cofactor.

It carries out the reaction hydrogen sulfide + glycine + NAD(+) = ADP-5-ethyl-4-methylthiazole-2-carboxylate + nicotinamide + 3 H2O + H(+). It functions in the pathway cofactor biosynthesis; thiamine diphosphate biosynthesis. In terms of biological role, involved in the biosynthesis of the thiazole moiety of thiamine. Catalyzes the conversion of NAD and glycine to adenosine diphosphate 5-(2-hydroxyethyl)-4-methylthiazole-2-carboxylate (ADT), an adenylated thiazole intermediate, using free sulfide as a source of sulfur. The sequence is that of Thiamine thiazole synthase from Pyrobaculum islandicum (strain DSM 4184 / JCM 9189 / GEO3).